Consider the following 336-residue polypeptide: Cell division protein ZipA (336 aa).

Residues 1 to 2 (ME) lie on the Periplasmic side of the membrane. Residues 3–23 (LHILFFILAGLLIAVLIGFSL) traverse the membrane as a helical segment. Topologically, residues 24-336 (WSARREKSRI…SRQSYLARVS (313 aa)) are cytoplasmic. The segment at 57–76 (SLNPQSYAQTTGQHGETEAD) is disordered. Polar residues predominate over residues 59 to 70 (NPQSYAQTTGQH).

The protein belongs to the ZipA family. In terms of assembly, interacts with FtsZ via their C-terminal domains.

Its subcellular location is the cell inner membrane. Functionally, essential cell division protein that stabilizes the FtsZ protofilaments by cross-linking them and that serves as a cytoplasmic membrane anchor for the Z ring. Also required for the recruitment to the septal ring of downstream cell division proteins. The protein is Cell division protein ZipA of Actinobacillus pleuropneumoniae serotype 7 (strain AP76).